Reading from the N-terminus, the 3587-residue chain is Tyrocidine synthase 2 (3587 aa).

Residues 466-1045 (AATMHELFSR…IQALAAYVEG (580 aa)) form a domain 1 (Proline-activating) region. Carrier domains follow at residues 972-1047 (APTT…EGGE) and 2007-2082 (APAT…EHSE). O-(pantetheine 4'-phosphoryl)serine occurs at positions 1007 and 2042. Residues 1522 to 2081 (EQTAVVFGDK…RDLARLIEHS (560 aa)) are domain 2 (Phenylalanine-activating). Residues 2540–3122 (YRADQTIQQL…NSRESEQGVV (583 aa)) form a domain 3 (D-phenylalanine-activating) region. Residues 3017–3040 (NDKIDRKALPKPNQEENRTEQYAA) are disordered. Positions 3018-3035 (DKIDRKALPKPNQEENRT) are enriched in basic and acidic residues. A Carrier 3 domain is found at 3040–3114 (APQTELEQLL…EAALRVIPNS (75 aa)). Residue S3075 is modified to O-(pantetheine 4'-phosphoryl)serine.

The protein belongs to the ATP-dependent AMP-binding enzyme family. In terms of assembly, large multienzyme complex of TycA, TycB and TycC. Pantetheine 4'-phosphate serves as cofactor.

The catalysed reaction is L-phenylalanine + ATP + H2O = D-phenylalanine + AMP + diphosphate + H(+). It participates in antibiotic biosynthesis; tyrocidine biosynthesis. Activates the second to fourth amino acids in tyrocidine (in tyrocidine A, Pro, Phe, and D-Phe) and epimerizes the last one. This Brevibacillus parabrevis protein is Tyrocidine synthase 2 (tycB).